The following is a 221-amino-acid chain: MAKNKFNQSWLHDHINDPYVKMAQREGYRARAAYKLKEIDDQDKLIQPGQVIVDLGAAPGSWSQYARNKLAASPRAKDGRIDGAVVAIDILPMEPVADVTFIQGDFREEEVFRQLEQVVLDASGGSRIDLVISDMAPNLSGVASADAARIEYLCDLALDFAQAHLKPEGSLLVKCFHGSGYSQIVEKFKRQFKVVASRKPKASRDKSSETFILGRYLKSVD.

Positions 60, 62, 89, 105, and 134 each coordinate S-adenosyl-L-methionine. The Proton acceptor role is filled by K174.

The protein belongs to the class I-like SAM-binding methyltransferase superfamily. RNA methyltransferase RlmE family.

The protein localises to the cytoplasm. The catalysed reaction is uridine(2552) in 23S rRNA + S-adenosyl-L-methionine = 2'-O-methyluridine(2552) in 23S rRNA + S-adenosyl-L-homocysteine + H(+). In terms of biological role, specifically methylates the uridine in position 2552 of 23S rRNA at the 2'-O position of the ribose in the fully assembled 50S ribosomal subunit. The chain is Ribosomal RNA large subunit methyltransferase E from Cupriavidus metallidurans (strain ATCC 43123 / DSM 2839 / NBRC 102507 / CH34) (Ralstonia metallidurans).